The following is a 901-amino-acid chain: MAAQNEQRPERIKTTPYLEGDVLSSDSGPLLSVFALQEIMQKVRQVQADYMTATREVDFTVPDVQKILDDIKTLAAEQVYKIVKVPSISFRHIVMQSRDRVLRVDTYYEEMSQVGDVITEDEPEKFYSTIIKKVRFIRGKGSFILHDIPTRDHRGMEVAEPEVLGVEFKNVLPVLTAEHRAMIQNALDGSIIENGNVATRDVDVFIGACSEPIYRIYNRLQGYIEAVQLQELRNSIGWLERLGQRKRITYSQEVLTDFRRQDTIWVLALQLPVNPQVVWDVPRSSIANLIMNIATCLPTGEYIAPNPRISSITLTQRITTTGPFAILTGSTPTAQQLNDVRKIYLALMFPGQIVLDLKIDPGERMDPAVRMVAGVVGHLLFTAGGRFTNLTQNMARQLDIALNDYLLYMYNTRVQVNYGPTGEPLDFQIGRNQYDCNVFRADFATGTGYNGWATIDVEYRDPAPYVHAQRYIRYCGIDSRELINPTTYGIGMTYHCYNEMLRMLVAAGRDSEAAYFRSMLPFHMVRFARINQIINEDLHSVFSLPDDMFNALLPDLIAGAHQNADPVVLDVSWISLWFAFNRSFEPTHRNEMLEIAPLIESVYASELSVMKVDMRHLSLMQRRFPDVLIQARPSHFWKAVLNDSPEAVKAVMNLSHSHNFINIRDMMRWVLLPSLQPSLKLVLEEEAWAAANDFEDLMLTDQVYMHRDMLPEPRLDDIERFRQEGFYYTNMLEAPPEIDRVVQYTYEIARLQANMGQFRAALRRIMDDDDWVRFGGVLRTVRVKFFDARPPDDILQGLPFSYDTNEKGGLSYATIKYATETTIFYLIYNVEFSNTPDSLVLINPTYTMTKVFINKRIVERVRVGQILAVLNRRFVAYKGKMRIMDITQSLKMGTKLAAPTV.

The protein belongs to the orbivirus VP3 family.

The protein localises to the virion. In terms of biological role, the VP3 protein is one of the five proteins (with VP1, VP4, VP6 and VP7) which form the inner capsid of the virus. The protein is Core protein VP3 (Segment-3) of Bluetongue virus 10 (isolate USA) (BTV 10).